The primary structure comprises 536 residues: Pre-mRNA-splicing regulator female-lethal(2)D (536 aa).

Residues 1–91 form a disordered region; that stretch reads MSVAAMTMDD…LQQQQQQQQQ (91 aa). Over residues 28–39 the composition is skewed to low complexity; the sequence is QNLNILNSSQNS. A compositionally biased stretch (basic residues) spans 57–69; it reads HHHHHPHPHHHHH. Over residues 72–91 the composition is skewed to low complexity; the sequence is QQQQQQQQQHLQQQQQQQQQ. Residues 254 to 319 adopt a coiled-coil conformation; the sequence is KSFSEEVKKS…KQAIKDEVVA (66 aa). Positions 424 to 450 are disordered; that stretch reads APRTLPPKKSKLRGITTRRNSQLEEDH.

The protein belongs to the fl(2)d family. In terms of assembly, component of the WMM complex, a N6-methyltransferase complex composed of a catalytic subcomplex, named MAC, and of an associated subcomplex, named MACOM. The MAC subcomplex is composed of Ime4/Mettl3 and Mettl14. The MACOM subcomplex is composed of fl(2)d, Flacc/Xio, Hakai, vir, and, in some cases of nito. Interacts with vir and msk. Part of a complex containing fl(2)d, Sxl and vir.

Its subcellular location is the nucleus. Its function is as follows. Associated component of the WMM complex, a complex that mediates N6-methyladenosine (m6A) methylation of mRNAs, a modification that plays a role in the efficiency of mRNA splicing and is required for sex determination. Required for sex determination and dosage compensation via Sxl alternative splicing: m6A methylation acts as a key regulator of Sxl pre-mRNA and promotes female-specific alternative splicing of Sxl, which determines female physiognomy. M6A methylation is also required for neuronal functions. Required for proper inclusion of regulated exons in Ubx transcripts, leading to isoforms Ia/b and IIa/b. The polypeptide is Pre-mRNA-splicing regulator female-lethal(2)D (Drosophila melanogaster (Fruit fly)).